The sequence spans 811 residues: Zinc finger CCCH domain-containing protein 11A (811 aa).

C3H1-type zinc fingers lie at residues 2–30 (PNQG…HCEA), 32–58 (LGNE…HMEI), and 61–87 (KRSE…HHNR). A Phosphoserine modification is found at Ser-109. Glycyl lysine isopeptide (Lys-Gly) (interchain with G-Cter in SUMO2) cross-links involve residues Lys-115 and Lys-125. Residue Ser-133 is modified to Phosphoserine. Disordered stretches follow at residues 140 to 195 (MKVE…GLRV), 224 to 258 (KKMK…KENV), 286 to 352 (GKRK…EKVN), and 368 to 434 (ERAS…TCIK). Lys-141 is covalently cross-linked (Glycyl lysine isopeptide (Lys-Gly) (interchain with G-Cter in SUMO2)). 2 positions are modified to phosphoserine: Ser-150 and Ser-172. Positions 161–176 (ADDDEDDDDQFSEEGD) are enriched in acidic residues. Ser-291 carries the post-translational modification Phosphoserine. Composition is skewed to basic and acidic residues over residues 310-323 (KKVE…DKTP) and 368-391 (ERAS…KTDD). Thr-322 is subject to Phosphothreonine. Residues 363-424 (EEILLERASQ…KHRQQEAERQ (62 aa)) adopt a coiled-coil conformation. Ser-371 is subject to Phosphoserine. Residues 392 to 403 (STSGARSSSTIR) are compositionally biased toward polar residues. Residues 418 to 434 (QQEAERQKSKKDTTCIK) show a composition bias toward basic and acidic residues. Residue Lys-479 forms a Glycyl lysine isopeptide (Lys-Gly) (interchain with G-Cter in SUMO2) linkage. A disordered region spans residues 483-550 (ALRVQQSSES…KEASGETTGV (68 aa)). A compositionally biased stretch (low complexity) spans 487-499 (QQSSESSTSSPSQ). Lys-620 is covalently cross-linked (Glycyl lysine isopeptide (Lys-Gly) (interchain with G-Cter in SUMO2)). The tract at residues 716–769 (TVPEAENPRDSLVLPPTQSSSDSSPPEVSGPSSSQMSMKTRRLSSASTGKPQLS) is disordered. The segment covering 730–749 (PPTQSSSDSSPPEVSGPSSS) has biased composition (low complexity). Residues 750–766 (QMSMKTRRLSSASTGKP) are compositionally biased toward polar residues.

Interacts with TREX complex components THOC2, DDX39 and POLDIP3; the interactions are ATP-dependent. Interacts with PABPN1; this interaction retains ZC3H11A in nuclear speckles. Interacts with KPNA3.

The protein resides in the nucleus speckle. Its function is as follows. Through its association with TREX complex components, may participate in the export and post-transcriptional coordination of selected mRNA transcripts, including those required to maintain the metabolic processes in embryonic cells. Binds RNA. The chain is Zinc finger CCCH domain-containing protein 11A (ZC3H11A) from Pongo abelii (Sumatran orangutan).